Consider the following 294-residue polypeptide: Fatty acyl-CoA reductase Rv0547c (294 aa).

Residues Ser49, Ser50, Ile52, Arg72, Asp97, Leu98, Asn124, Tyr192, Lys196, Val225, and Thr227 each coordinate NADP(+). Tyr192 serves as the catalytic Proton acceptor.

It belongs to the short-chain dehydrogenases/reductases (SDR) family.

The protein resides in the host mitochondrion. The catalysed reaction is hexadecanal + NADP(+) + CoA = hexadecanoyl-CoA + NADPH + H(+). In terms of biological role, oxidoreductase that promotes the persistence of M.tuberculosis in host macrophages by reprogramming the fatty acid metabolism in host mitochondria. When localized in the host mitochondria, it potentially acts on unknown lipid substrates and converts them into products that directly or indirectly alter the lipid profile of the mitochondria. This change in lipid profile results in increased mitochondrial membrane fluidity, enhanced endogenous fatty acid oxidation and increased mitochondrial spare respiratory capacity. All these events eventually favor M.tuberculosis persistence in the host macrophages. In vitro, can catalyze the NADPH-dependent reduction of palmitoyl-CoA (hexadecanoyl-CoA). The polypeptide is Fatty acyl-CoA reductase Rv0547c (Mycobacterium tuberculosis (strain ATCC 25618 / H37Rv)).